Reading from the N-terminus, the 1925-residue chain is MEDASKQLRVLDAQERAKAAFQLDFIASVETLEDAQEKYEGMMFRSGTKLPSTHIKLAIDLRVAEKDLRRHVKNVPTVLEIGPSVESVRYAVQTRDKERVHGCTFSDARDNLRHNKIGYEAHYDRKIGPDAALLAAGIPTDTFCVDGFSNCEYQSPLAIACHSLYPDGESNSIMDVAKGMALHGTHVIYAWMHLPVELLTLTDADNIFEGYSIRFEETGALPCTKRRKAIFSGYNDFGSAYVHDAHHWAGWLKHRGVDTPYGFSILIDIQQRFGMHTKLKITRGHSSGSITTVFPLSKLGLIWVPNIVKIMYPKAKHEPEYIVTDKKKYEGVCVYVGTRVQSSGKSITLAEIVQYIRTRLTRIILNGTVHEKTWTIAEQDIERLAVSIMFRKNVERAVSEKALMRAQKKCKSAEKQALLPVWMRRIANWFQDKFQIDEEVVRKRYLECLKAQPWIHADKVVNCETKRYNPTVAEVGPKNHLLATTGLRELQREIPSANEPQDRGAKAWHSAHADLDIYAEGLRLDSAKEAAAGKQSLAITLQQAFQVLGKTKCEGCNNIEIEYWTGPPGSGKSRAAKPRFADLQGGVLYCAPTRTLRDALDESVVHPSRVCTYHNALHVAAKESGNRPFDVIVIDEAETTPACYVGTMHHASPSSRIVCLGDPHQIGYIDFSDRKDDLKPFSIIAAECRTRRFNTTYRCPQDVLNLPIFKTLYPDAISFSKQLTSIRYLTRARSVTRTRHAQTLTQDQKPHSEPPVTAHEPQARRTDVIVHYAGTLPERALLEKVRHINVALTRHTNALYIRDESEKGELVPSLMTPPSWSTYRCTPVDKQMVPDPVAVERENGSSGPCDSHHIGAITILQELGKLTDTKGVRVFESEAVPTAHRRVVLDGNLDSGPDRYPMYQFTNLRGTKYTNIKDNQQALHTLVGRYARKINSSSREDAEFDVKRITARLKEWIPFRTAEPEQVDSCFADAMQKIAERGHGVDDIEDFWSNEGQRISYHLKGQQKVMDPTKLKLGQGISAHEKCANIALSAWVRIIQDQMSTSEKFIFANGQSDRDTMSIIEARLQEKAREFKSIDIKEFDTVHNWVSILVFSWRCDRGCPEHLIEYFEKRSKSRTLSSRIGSVDVSFMLDSGAVWTIARNTLFASGLMLALFVGVDFIAAKGDDVFLAGNNLYLDAERLRMGSYLAANNLKIEKTAVVSFIGFIVSQAAVTADVVRLATRTYGRSYKNADDLAKYKIAIADHCKLFRSPRTRLMTAINCATLYGTSKECINYLMDALDAFGHTKMSDLHLDPGFVMRVTPMKVDERVYSGQDGCQRADKTREKQPEPGQPGPQQQQQASTQEAGSKTSPRSRTDYQPRPDGRTREPREHPGQPRSDTREGVKASDDGESHGSDIRGMDSRLSRPGRRIQDEPGRRENSRRRDTSVNMRSISRDRGRQIPGTEFYDATAGWRDLASTSDASPVLQASVVVHHHHQQHGSRSDERRSGCVRERLEQQDGLDRSDVPKLGASRERVLHGRPDRSADGRTTPDSTGCIRVTRELPSDIERRHSVLQRTHSRESGSGGDRAVPTGQRTPEGEPGHSSRDHPNGRNVTARRFRAELHIDDDDRGPGRVRGRSNPATHGVDGADAGVGAAGVPDCEPDIRRRKHNHHHDHAATRVGDGNVAIHSQQRDGHRDRGRGSATVRVRSEFGRLGTESAGHQLNQDSTNEHEPNDAGNAQDHSVPTQRNEGLLYAPEGVPTRVRNDNGDVLWTGAMEDTEDNCGRLPPGNWWTPGYHRQQLRDRRCRDDRYVYINRTLLQGVPTLRSDTGGGEPLGPLRQCDTSEGRRGANSGSNLDRSAPIRIPGTIQRIRGPIRDGGQDHSPDTSLCAISSRSGECGDGLHRERDRECSLEFHLGEAATKSETCWRNRSRSPQSCGPHREP.

One can recognise an Alphavirus-like MT domain in the interval R45 to L252. In terms of domain architecture, (+)RNA virus helicase ATP-binding spans G533–F693. In terms of domain architecture, (+)RNA virus helicase C-terminal spans N694–P834. 6 disordered regions span residues R737–E760, R1310–T1445, Q1468–A1636, N1666–P1727, T1806–P1847, and S1905–P1925. Basic and acidic residues predominate over residues Q1319–P1329. Polar residues predominate over residues A1342–R1354. Basic and acidic residues-rich tracts occupy residues S1355 to T1427, S1482 to D1527, V1540 to H1552, and P1578 to N1591. Residues G1626 to A1636 are compositionally biased toward low complexity. Residues Q1672–R1682 are compositionally biased toward basic and acidic residues. Over residues S1905–S1918 the composition is skewed to polar residues.

It belongs to the ssRNA positive-strand viruses RNA-directed RNA polymerase family.

It catalyses the reaction RNA(n) + a ribonucleoside 5'-triphosphate = RNA(n+1) + diphosphate. The catalysed reaction is ATP + H2O = ADP + phosphate + H(+). Functionally, RNA-dependent RNA polymerase replicates the viral genome. In Nudaurelia capensis beta virus (isolate Pine emperor moth/South Africa) (NbetaV), this protein is Methyltransferase/helicase/RNA-directed RNA polymerase.